We begin with the raw amino-acid sequence, 297 residues long: N-acetylneuraminate lyase (297 aa).

Ser47 and Thr48 together coordinate aceneuramate. Tyr137 (proton donor) is an active-site residue. Lys165 functions as the Schiff-base intermediate with substrate in the catalytic mechanism. Thr167, Gly189, Asp191, Glu192, and Ser208 together coordinate aceneuramate.

The protein belongs to the DapA family. NanA subfamily. As to quaternary structure, homotetramer.

It is found in the cytoplasm. The catalysed reaction is aceneuramate = aldehydo-N-acetyl-D-mannosamine + pyruvate. It functions in the pathway amino-sugar metabolism; N-acetylneuraminate degradation; D-fructose 6-phosphate from N-acetylneuraminate: step 1/5. In terms of biological role, catalyzes the reversible aldol cleavage of N-acetylneuraminic acid (sialic acid; Neu5Ac) to form pyruvate and N-acetylmannosamine (ManNAc) via a Schiff base intermediate. This Escherichia coli O139:H28 (strain E24377A / ETEC) protein is N-acetylneuraminate lyase.